The following is a 571-amino-acid chain: Hemagglutinin-neuraminidase (571 aa).

The Intravirion portion of the chain corresponds to 1–25 (MEDYSNLSLKSIPKRTCRIIFRTAT). Residues 26–46 (ILGICTLIVLCSSILHEIIHL) form a helical membrane-spanning segment. Topologically, residues 47–571 (DVSSGLMDSD…IIPFLRELIP (525 aa)) are virion surface. 3 disulfides stabilise this stretch: C166/C190, C180/C241, and C232/C245. An involved in neuraminidase activity region spans residues 228–233 (NRKSCS). N272, N284, and N335 each carry an N-linked (GlcNAc...) asparagine; by host glycan. 3 disulfide bridges follow: C338–C459, C370–C380, and C453–C463. 6 N-linked (GlcNAc...) asparagine; by host glycosylation sites follow: N386, N454, N498, N501, N517, and N522. A disulfide bridge connects residues C535 and C546.

This sequence belongs to the paramyxoviruses hemagglutinin-neuraminidase family. In terms of assembly, homotetramer; composed of disulfide-linked homodimers. Interacts with F protein trimer.

The protein localises to the virion membrane. It localises to the host cell membrane. The enzyme catalyses Hydrolysis of alpha-(2-&gt;3)-, alpha-(2-&gt;6)-, alpha-(2-&gt;8)- glycosidic linkages of terminal sialic acid residues in oligosaccharides, glycoproteins, glycolipids, colominic acid and synthetic substrates.. Functionally, attaches the virus to sialic acid-containing cell receptors and thereby initiating infection. Binding of HN protein to the receptor induces a conformational change that allows the F protein to trigger virion/cell membranes fusion. In terms of biological role, neuraminidase activity ensures the efficient spread of the virus by dissociating the mature virions from the neuraminic acid containing glycoproteins. This Homo sapiens (Human) protein is Hemagglutinin-neuraminidase (HN).